A 1231-amino-acid polypeptide reads, in one-letter code: ATP-dependent RNA helicase DHX30 (1231 aa).

A disordered region spans residues proline 39 to alanine 65. DRBM domains are found at residues proline 80–phenylalanine 148 and proline 292–leucine 359. The 169-residue stretch at leucine 488–proline 656 folds into the Helicase ATP-binding domain. Glycine 501–threonine 508 contributes to the ATP binding site. Positions aspartate 603–histidine 606 match the DEAH box motif. The 174-residue stretch at leucine 697–methionine 870 folds into the Helicase C-terminal domain.

It belongs to the DEAD box helicase family. DEAH subfamily.

The protein localises to the cytoplasm. The protein resides in the mitochondrion. Its subcellular location is the mitochondrion matrix. It is found in the mitochondrion nucleoid. The enzyme catalyses ATP + H2O = ADP + phosphate + H(+). In terms of biological role, RNA-dependent helicase. Plays an important role in the assembly of the mitochondrial large ribosomal subunit. Required for optimal function of the zinc-finger antiviral protein ZC3HAV1. Associates with mitochondrial DNA. Involved in nervous system development and differentiation through its involvement in the up-regulation of a number of genes which are required for neurogenesis, including GSC, NCAM1, neurogenin, and NEUROD. The polypeptide is ATP-dependent RNA helicase DHX30 (DHX30) (Gallus gallus (Chicken)).